Reading from the N-terminus, the 227-residue chain is NADH-quinone oxidoreductase subunit C (227 aa).

The protein belongs to the complex I 30 kDa subunit family. NDH-1 is composed of 14 different subunits. Subunits NuoB, C, D, E, F, and G constitute the peripheral sector of the complex.

It is found in the cell inner membrane. It catalyses the reaction a quinone + NADH + 5 H(+)(in) = a quinol + NAD(+) + 4 H(+)(out). In terms of biological role, NDH-1 shuttles electrons from NADH, via FMN and iron-sulfur (Fe-S) centers, to quinones in the respiratory chain. The immediate electron acceptor for the enzyme in this species is believed to be ubiquinone. Couples the redox reaction to proton translocation (for every two electrons transferred, four hydrogen ions are translocated across the cytoplasmic membrane), and thus conserves the redox energy in a proton gradient. The polypeptide is NADH-quinone oxidoreductase subunit C (Legionella pneumophila (strain Lens)).